The chain runs to 688 residues: MGQEKLYIEKELSWLSFNERVLQEAADKSNPLIERMRFLGIYSNNLDEFYKVRFAELKRRIIISEEQGSNSHSRHLLGKIQSRVLKADQEFDGLYNELLLEMARNQIFLINERQLSVNQQNWLRHYFKQYLRQHITPILINPDTDLVQFLKDDYTYLAVEIIRGDTIRYALLEIPSDKVPRFVNLPPEAPRRRKPMILLDNILRYCLDDIFKGFFDYDALNAYSMKMTRDAEYDLVHEMEASLMELMSSSLKQRLTAEPVRFVYQRDMPNALVEVLREKLTISRYDSIVPGGRYHNFKDFINFPNVGKANLVNKPLPRLRHIWFDKAQFRNGFDAIRERDVLLYYPYHTFEHVLELLRQASFDPSVLAIKINIYRVAKDSRIIDSMIHAAHNGKKVTVVVELQARFDEEANIHWAKRLTEAGVHVIFSAPGLKIHAKLFLISRKENGEVVRYAHIGTGNFNEKTARLYTDYSLLTADARITNEVRRVFNFIENPYRPVTFDYLMVSPQNSRRLLYEMVDREIANAQQGLPSGITLKLNNLVDKGLVDRLYAASSSGVPVNLLVRGMCSLIPNLEGISDNIRAISIVDRYLEHDRVYIFENGGDKKVYLSSADWMTRNIDYRIEVATPLLDPRLKQRVLDIIDILFSDTVKARYIDKELSNRYVPRGNRRKVRAQLAIYDYIKSLEQSE.

Asn45 provides a ligand contact to ATP. Mg(2+)-binding residues include Arg375 and Arg405. Residues 430-464 (PGLKIHAKLFLISRKENGEVVRYAHIGTGNFNEKT) form the PLD phosphodiesterase domain. The active-site Phosphohistidine intermediate is the His435. The ATP site is built by Tyr468, Arg564, and His592.

Belongs to the polyphosphate kinase 1 (PPK1) family. Mg(2+) serves as cofactor. In terms of processing, an intermediate of this reaction is the autophosphorylated ppk in which a phosphate is covalently linked to a histidine residue through a N-P bond.

It catalyses the reaction [phosphate](n) + ATP = [phosphate](n+1) + ADP. In terms of biological role, catalyzes the reversible transfer of the terminal phosphate of ATP to form a long-chain polyphosphate (polyP). This is Polyphosphate kinase from Escherichia coli O6:H1 (strain CFT073 / ATCC 700928 / UPEC).